Reading from the N-terminus, the 185-residue chain is Crossover junction endodeoxyribonuclease RuvC (185 aa).

Residues Asp-7, Glu-68, and Asp-141 contribute to the active site. Mg(2+) contacts are provided by Asp-7, Glu-68, and Asp-141.

This sequence belongs to the RuvC family. As to quaternary structure, homodimer which binds Holliday junction (HJ) DNA. The HJ becomes 2-fold symmetrical on binding to RuvC with unstacked arms; it has a different conformation from HJ DNA in complex with RuvA. In the full resolvosome a probable DNA-RuvA(4)-RuvB(12)-RuvC(2) complex forms which resolves the HJ. Mg(2+) is required as a cofactor.

Its subcellular location is the cytoplasm. The catalysed reaction is Endonucleolytic cleavage at a junction such as a reciprocal single-stranded crossover between two homologous DNA duplexes (Holliday junction).. The RuvA-RuvB-RuvC complex processes Holliday junction (HJ) DNA during genetic recombination and DNA repair. Endonuclease that resolves HJ intermediates. Cleaves cruciform DNA by making single-stranded nicks across the HJ at symmetrical positions within the homologous arms, yielding a 5'-phosphate and a 3'-hydroxyl group; requires a central core of homology in the junction. The consensus cleavage sequence is 5'-(A/T)TT(C/G)-3'. Cleavage occurs on the 3'-side of the TT dinucleotide at the point of strand exchange. HJ branch migration catalyzed by RuvA-RuvB allows RuvC to scan DNA until it finds its consensus sequence, where it cleaves and resolves the cruciform DNA. The sequence is that of Crossover junction endodeoxyribonuclease RuvC from Mycobacterium sp. (strain MCS).